We begin with the raw amino-acid sequence, 258 residues long: Cyclohexa-1,5-dienecarbonyl-CoA hydratase (258 aa).

It belongs to the enoyl-CoA hydratase/isomerase family.

The enzyme catalyses cyclohexa-1,5-diene-1-carbonyl-CoA + H2O = 6-hydroxycyclohex-1-ene-1-carbonyl-CoA. It functions in the pathway aromatic compound metabolism; benzoyl-CoA degradation. Functionally, catalyzes the hydration of cyclohexa-1,5-diene-1-carboxyl-CoA. In Thauera aromatica, this protein is Cyclohexa-1,5-dienecarbonyl-CoA hydratase (dch).